The following is a 377-amino-acid chain: Terpene synthase 1 (377 aa).

Positions 81 to 86 match the DDxx(x)D/E motif motif; the sequence is DDALDA. Positions 221–229 match the NDxxSxxxD/E motif motif; that stretch reads NDLVSYEKE. Residues 326-359 are disordered; that stretch reads RKQSSSPNLTNSISIPTNNTNNSNNITSSPNKKQ. The span at 335–356 shows a compositional bias: low complexity; it reads TNSISIPTNNTNNSNNITSSPN.

The protein belongs to the terpene synthase family.

It catalyses the reaction (2E,6E)-farnesyl diphosphate = (2S,3R,6S,9S)-(-)-protoillud-7-ene + diphosphate. Functionally, terpene synthase that converts its substrate farnesyl diphosphate (FPP) into the sesquiterpene protoillud-7-ene. In Dictyostelium purpureum (Slime mold), this protein is Terpene synthase 1.